The sequence spans 164 residues: Histone H1 (164 aa).

Over residues 1 to 10 the composition is skewed to polar residues; that stretch reads MAPRSSTSKS. The segment at 1–164 is disordered; the sequence is MAPRSSTSKS…KKSSKPAKKN (164 aa). A compositionally biased stretch (basic residues) spans 16–27; sequence KDHKKAPIKKAI. 2 positions are modified to phosphothreonine: Thr-47 and Thr-54. Basic and acidic residues-rich tracts occupy residues 49-61, 69-89, and 117-156; these read VKKD…ADTK, TMKE…GDKK, and TKKE…DAKK.

Cell-growth/division-associated phosphorylation by a CDC2-like kinase.

The protein resides in the nucleus. It localises to the chromosome. Functionally, histones H1 are necessary for the condensation of nucleosome chains into higher-order structures. This Tetrahymena thermophila (strain SB210) protein is Histone H1 (HHO).